Here is a 151-residue protein sequence, read N- to C-terminus: NADPH-dependent 7-cyano-7-deazaguanine reductase (151 aa).

Cysteine 49 acts as the Thioimide intermediate in catalysis. Residue aspartate 56 is the Proton donor of the active site. Substrate is bound by residues 71-73 (IES) and 90-91 (HE).

This sequence belongs to the GTP cyclohydrolase I family. QueF type 1 subfamily.

It localises to the cytoplasm. The catalysed reaction is 7-aminomethyl-7-carbaguanine + 2 NADP(+) = 7-cyano-7-deazaguanine + 2 NADPH + 3 H(+). It functions in the pathway tRNA modification; tRNA-queuosine biosynthesis. In terms of biological role, catalyzes the NADPH-dependent reduction of 7-cyano-7-deazaguanine (preQ0) to 7-aminomethyl-7-deazaguanine (preQ1). The polypeptide is NADPH-dependent 7-cyano-7-deazaguanine reductase (Caulobacter vibrioides (strain ATCC 19089 / CIP 103742 / CB 15) (Caulobacter crescentus)).